Reading from the N-terminus, the 478-residue chain is Cytochrome c-552 (478 aa).

Residues 1–27 form the signal peptide; the sequence is MKKQWTRRSAAAIAMVTTLLLSSHSFA. A heme c-binding site is contributed by histidine 91. Residues cysteine 119, cysteine 122, and lysine 123 each contribute to the heme site. Heme c is bound by residues cysteine 157, cysteine 160, histidine 161, cysteine 206, cysteine 209, and histidine 210. Ca(2+) is bound by residues glutamate 212, tyrosine 213, lysine 258, and glutamine 260. Tyrosine 213 serves as a coordination point for substrate. Histidine 261 contributes to the substrate binding site. The heme c site is built by histidine 272, cysteine 279, cysteine 282, histidine 283, histidine 298, cysteine 311, cysteine 314, histidine 315, and histidine 390.

This sequence belongs to the cytochrome c-552 family. It depends on Ca(2+) as a cofactor. Heme c is required as a cofactor.

Its subcellular location is the periplasm. It catalyses the reaction 6 Fe(III)-[cytochrome c] + NH4(+) + 2 H2O = 6 Fe(II)-[cytochrome c] + nitrite + 8 H(+). The protein operates within nitrogen metabolism; nitrate reduction (assimilation). In terms of biological role, catalyzes the reduction of nitrite to ammonia, consuming six electrons in the process. The chain is Cytochrome c-552 from Aliivibrio salmonicida (strain LFI1238) (Vibrio salmonicida (strain LFI1238)).